The chain runs to 149 residues: Protein SprT-like (149 aa).

In terms of domain architecture, SprT-like spans 4–144 (TDYVKQVSLE…GLCRGKLLLV (141 aa)). A Zn(2+)-binding site is contributed by H64. E65 is an active-site residue. Residue H68 participates in Zn(2+) binding.

This sequence belongs to the SprT family. The cofactor is Zn(2+).

It is found in the cytoplasm. The polypeptide is Protein SprT-like (Streptococcus pneumoniae serotype 4 (strain ATCC BAA-334 / TIGR4)).